A 413-amino-acid chain; its full sequence is Alpha-1-antitrypsin 1-2 (413 aa).

The N-terminal stretch at 1 to 24 is a signal peptide; that stretch reads MTPSISWGLLLLAGLCCMVPSFLA. N-linked (GlcNAc...) asparagine glycosylation is found at Asn-64, Asn-101, and Asn-265. Residues 368 to 387 form an RCL region; it reads AATVFEAVPMSMPPILRFDH.

This sequence belongs to the serpin family.

It localises to the secreted. In terms of biological role, inhibitor of serine proteases. Its primary target is elastase, but it also has a moderate affinity for plasmin and thrombin. This chain is Alpha-1-antitrypsin 1-2 (Serpina1b), found in Mus musculus (Mouse).